Here is a 131-residue protein sequence, read N- to C-terminus: MRHYEIVFMVHPDQSEQVPGMIERYTGVITEANGTIHRLEDWGRRQLAYPILDLHKAHYVLMNVEAKAETIEELETAFRFNDAVLRNMVMRTKVAVTEASPMAKARDERDSRRGPAGERSYDEAHAEEIAE.

Positions 97-131 (TEASPMAKARDERDSRRGPAGERSYDEAHAEEIAE) are disordered. Residues 104 to 131 (KARDERDSRRGPAGERSYDEAHAEEIAE) show a composition bias toward basic and acidic residues.

The protein belongs to the bacterial ribosomal protein bS6 family.

Binds together with bS18 to 16S ribosomal RNA. The chain is Small ribosomal subunit protein bS6 from Shewanella baltica (strain OS223).